Here is a 194-residue protein sequence, read N- to C-terminus: Adenylate kinase (194 aa).

ATP is bound at residue 11–16 (GSGKGT). An NMP region spans residues 31-60 (STGELLRAEIKAQTELGQAAAGYINEGHLV). Residues threonine 32, arginine 37, 58–60 (HLV), 86–89 (GFPR), and glutamine 93 contribute to the AMP site. The segment at 127-137 (NRGKVSGRSDD) is LID. Arginine 128 provides a ligand contact to ATP. Residues arginine 134 and arginine 145 each coordinate AMP. Glycine 173 contributes to the ATP binding site.

The protein belongs to the adenylate kinase family. As to quaternary structure, monomer.

The protein localises to the cytoplasm. It carries out the reaction AMP + ATP = 2 ADP. The protein operates within purine metabolism; AMP biosynthesis via salvage pathway; AMP from ADP: step 1/1. Functionally, catalyzes the reversible transfer of the terminal phosphate group between ATP and AMP. Plays an important role in cellular energy homeostasis and in adenine nucleotide metabolism. In Porphyromonas gingivalis (strain ATCC BAA-308 / W83), this protein is Adenylate kinase.